The primary structure comprises 213 residues: Sclerostin (213 aa).

The first 23 residues, 1 to 23 (MQLPLALCLVCLLVHTAFRVVEG), serve as a signal peptide directing secretion. The disordered stretch occupies residues 41–71 (GEYPEPPPELENNKTMNRAENGGRPPHHPFE). N-linked (GlcNAc...) asparagine glycosylation is present at Asn-53. Intrachain disulfides connect Cys-80/Cys-134, Cys-94/Cys-148, Cys-105/Cys-165, and Cys-109/Cys-167. The 91-residue stretch at 82-172 (ELHFTRYVTD…ASCKCKRLTR (91 aa)) folds into the CTCK domain. N-linked (GlcNAc...) asparagine glycosylation occurs at Asn-175. Residues 178–213 (ELKDFGTEAARPQKGRKPRPRARSAKANQAELENAY) form a disordered region. Positions 190-201 (QKGRKPRPRARS) are enriched in basic residues.

Belongs to the sclerostin family. Interacts with LRP4 (via the extracellular domain); the interaction facilitates the inhibition of Wnt signaling. Interacts with LRP5 (via the first two YWTD-EGF repeat domains); the interaction inhibits Wnt-mediated signaling. Interacts with LRP6. In terms of tissue distribution, widely expressed at low levels with highest levels in bone, cartilage, kidney, liver, bone marrow and primary osteoblasts differentiated for 21 days. Detected in the subendothelial layer of the aortic intima (at protein level).

Its subcellular location is the secreted. The protein resides in the extracellular space. It is found in the extracellular matrix. Negative regulator of bone growth that acts through inhibition of Wnt signaling and bone formation. The polypeptide is Sclerostin (Homo sapiens (Human)).